Reading from the N-terminus, the 180-residue chain is Shikimate kinase (180 aa).

Residue 14-19 (GAGKTC) coordinates ATP. Residue Thr-18 participates in Mg(2+) binding. Residues Asp-36, Arg-60, and Gly-82 each coordinate substrate. Arg-120 provides a ligand contact to ATP. A substrate-binding site is contributed by Arg-139.

This sequence belongs to the shikimate kinase family. Monomer. Requires Mg(2+) as cofactor.

It localises to the cytoplasm. It catalyses the reaction shikimate + ATP = 3-phosphoshikimate + ADP + H(+). It functions in the pathway metabolic intermediate biosynthesis; chorismate biosynthesis; chorismate from D-erythrose 4-phosphate and phosphoenolpyruvate: step 5/7. In terms of biological role, catalyzes the specific phosphorylation of the 3-hydroxyl group of shikimic acid using ATP as a cosubstrate. This chain is Shikimate kinase, found in Stenotrophomonas maltophilia (strain K279a).